The primary structure comprises 289 residues: Zinc finger matrin-type protein 3 (289 aa).

2 Matrin-type zinc fingers span residues 70 to 100 (LFCK…KLRN) and 147 to 177 (DYCK…RLRL). Disordered stretches follow at residues 180–202 (AQSH…EGSE) and 265–289 (ESKQ…GYVQ). Residues 245–275 (FYCSMCNVGAGEEVEFRQHLESKQHKSKVSE) form a Matrin-type 3 zinc finger. The span at 265 to 282 (ESKQHKSKVSEQRYRSEM) shows a compositional bias: basic and acidic residues.

As to quaternary structure, interacts with dsRNA. In terms of tissue distribution, highly expressed in brain, gut, lung, and testis.

It is found in the nucleus. Its subcellular location is the nucleolus. In terms of biological role, acts as a bona fide target gene of p53/TP53. May play a role in the TP53-dependent growth regulatory pathway. May contribute to TP53-mediated apoptosis by regulation of TP53 expression and translocation to the nucleus and nucleolus. In Rattus norvegicus (Rat), this protein is Zinc finger matrin-type protein 3.